The following is a 527-amino-acid chain: Tubulin-specific chaperone E (527 aa).

S2 is subject to N-acetylserine. In terms of domain architecture, CAP-Gly spans 27-71 (GVVPPVAGPWLGVEWDNPERGKHDGSHEGTVYFKCRHPTGGSFIR). LRR repeat units lie at residues 154–175 (NIRK…IHIA), 180–200 (HLEV…SVLT), 205–226 (VLKV…RCVA), 230–252 (GLEE…DVLQ), 253–274 (TVKL…YLIA), 278–299 (RLEQ…DAGI), and 308–329 (SLKY…NELE). Residues 342 to 384 (NPLTKEDKEAETARLLIIASIGQLKTLNKCEILPEERRRAELD) enclose the LRRCT domain. K463 bears the N6-acetyllysine mark. S495 is modified (phosphoserine).

Belongs to the TBCE family. In terms of assembly, supercomplex made of cofactors A to E. Cofactors A and D function by capturing and stabilizing tubulin in a quasi-native conformation. Cofactor E binds to the cofactor D-tubulin complex; interaction with cofactor C then causes the release of tubulin polypeptides that are committed to the native state. Cofactors B and E can form a heterodimer which binds to alpha-tubulin and enhances their ability to dissociate tubulin heterodimers. Interacts with TBCD.

The protein localises to the cytoplasm. It localises to the cytoskeleton. In terms of biological role, tubulin-folding protein; involved in the second step of the tubulin folding pathway and in the regulation of tubulin heterodimer dissociation. Required for correct organization of microtubule cytoskeleton and mitotic splindle, and maintenance of the neuronal microtubule network. The protein is Tubulin-specific chaperone E (TBCE) of Homo sapiens (Human).